The chain runs to 317 residues: Acetyl-coenzyme A carboxylase carboxyl transferase subunit beta (317 aa).

One can recognise a CoA carboxyltransferase N-terminal domain in the interval 30-299 (LWTKCVACTA…VLPPLNVREK (270 aa)). The Zn(2+) site is built by Cys34, Cys37, Cys53, and Cys56. The C4-type zinc-finger motif lies at 34–56 (CVACTALTYTKDLQANQLVCTEC).

This sequence belongs to the AccD/PCCB family. As to quaternary structure, acetyl-CoA carboxylase is a heterohexamer composed of biotin carboxyl carrier protein (AccB), biotin carboxylase (AccC) and two subunits each of ACCase subunit alpha (AccA) and ACCase subunit beta (AccD). It depends on Zn(2+) as a cofactor.

The protein resides in the cytoplasm. It catalyses the reaction N(6)-carboxybiotinyl-L-lysyl-[protein] + acetyl-CoA = N(6)-biotinyl-L-lysyl-[protein] + malonyl-CoA. It functions in the pathway lipid metabolism; malonyl-CoA biosynthesis; malonyl-CoA from acetyl-CoA: step 1/1. Component of the acetyl coenzyme A carboxylase (ACC) complex. Biotin carboxylase (BC) catalyzes the carboxylation of biotin on its carrier protein (BCCP) and then the CO(2) group is transferred by the transcarboxylase to acetyl-CoA to form malonyl-CoA. In Crocosphaera subtropica (strain ATCC 51142 / BH68) (Cyanothece sp. (strain ATCC 51142)), this protein is Acetyl-coenzyme A carboxylase carboxyl transferase subunit beta.